We begin with the raw amino-acid sequence, 177 residues long: Dual-action ribosomal maturation protein DarP (177 aa).

It belongs to the DarP family.

The protein resides in the cytoplasm. In terms of biological role, member of a network of 50S ribosomal subunit biogenesis factors which assembles along the 30S-50S interface, preventing incorrect 23S rRNA structures from forming. Promotes peptidyl transferase center (PTC) maturation. In Histophilus somni (strain 2336) (Haemophilus somnus), this protein is Dual-action ribosomal maturation protein DarP.